A 453-amino-acid chain; its full sequence is MTTDTIVAQATAPGRGGVGIIRISGDKASDVAMAVLGHLPKTRYADYCDFKSASGQVIDQGIALFFKGPNSFTGEDVLELQGHGGQIVLDMLIKRVMEVGGIRIAKPGEFSEQAFMNDKLDLTQAEAIADLIDATSEQAAKSALQSLQGEFSKEVHELVDQVTNLRLYVEAAIDFPDEEVDFLSDGKIANALYKIIDKLDLVQASAKQGSIIREGMKVVIAGRPNAGKSSLLNALAGKESAIVTEIAGTTRDVLREHIHLDGMPLHIIDTAGLRDTTDTVEQIGIERAWNEINSADRVLFMVDGTTTAAVDPHTIWPDFVDRLPSNLGVTVIRNKADLTGEDLMMTEEQGYSVYRISAKTGLGVEELKQHLKSLMGYQSNLEGGFIARRRHLEALELAAGHLQLGKEQLEVYLAGELLAEELRMCQLALSEITGRFTSDDLLGKIFSSFCIGK.

(6S)-5-formyl-5,6,7,8-tetrahydrofolate-binding residues include Arg-22, Glu-79, and Lys-119. The TrmE-type G domain maps to 215 to 376 (GMKVVIAGRP…LKQHLKSLMG (162 aa)). A K(+)-binding site is contributed by Asn-225. Residues 225–230 (NAGKSS), 244–250 (TEIAGTT), 269–272 (DTAG), and 334–337 (NKAD) contribute to the GTP site. Ser-229 contributes to the Mg(2+) binding site. K(+)-binding residues include Thr-244, Ile-246, and Thr-249. Position 250 (Thr-250) interacts with Mg(2+). Position 453 (Lys-453) interacts with (6S)-5-formyl-5,6,7,8-tetrahydrofolate.

The protein belongs to the TRAFAC class TrmE-Era-EngA-EngB-Septin-like GTPase superfamily. TrmE GTPase family. In terms of assembly, homodimer. Heterotetramer of two MnmE and two MnmG subunits. The cofactor is K(+).

Its subcellular location is the cytoplasm. Exhibits a very high intrinsic GTPase hydrolysis rate. Involved in the addition of a carboxymethylaminomethyl (cmnm) group at the wobble position (U34) of certain tRNAs, forming tRNA-cmnm(5)s(2)U34. The polypeptide is tRNA modification GTPase MnmE (Shewanella baltica (strain OS185)).